A 569-amino-acid chain; its full sequence is Retrotransposon Gag-like protein 5 (569 aa).

Disordered regions lie at residues 115-151 (DGPADPPLLPIPPPPALPPPASKEPPPQPPLAPLERP) and 323-506 (RNII…PSRR). Positions 117–146 (PADPPLLPIPPPPALPPPASKEPPPQPPLA) are enriched in pro residues. Over residues 334–350 (NEEESEDEEYYSEDEDQ) the composition is skewed to acidic residues. The segment covering 353-367 (RRHRLHSKDQRKRMR) has biased composition (basic residues). Basic and acidic residues-rich tracts occupy residues 372-392 (EMKEKEEEEMKKEEEMKKKEE) and 401-415 (MKQKEEEEEIRNKNE). Acidic residues-rich tracts occupy residues 416 to 429 (EEGESKDEEDEDED) and 443 to 469 (GTEETYGEVEEEPLDEAQDDDLDELME). A compositionally biased stretch (polar residues) spans 476–485 (HASSQTSGPT).

The protein is Retrotransposon Gag-like protein 5 of Homo sapiens (Human).